A 169-amino-acid chain; its full sequence is Steroid receptor-associated and regulated protein (169 aa).

Interacts with 14-3-3 proteins. In terms of tissue distribution, expressed in breast tumors with a higher expression level in estrogen receptor-positive cancers.

In terms of biological role, may regulate the transcriptional function of androgen and estrogen receptors. The chain is Steroid receptor-associated and regulated protein from Homo sapiens (Human).